Consider the following 79-residue polypeptide: MPKRLSGLQKEVLHLYRASIRTAHTKPKENQVNFVNYIHEEFGKYRNLPRKDFTTIEHLLRVGNKKIATFSHPELTNIH.

Belongs to the complex I LYR family. SDHAF1 subfamily. Interacts with SDH2 within an SDH1-SDH2 subcomplex.

The protein localises to the mitochondrion matrix. Its function is as follows. Plays an essential role in the assembly of succinate dehydrogenase (SDH), an enzyme complex (also referred to as respiratory complex II) that is a component of both the tricarboxylic acid (TCA) cycle and the mitochondrial electron transport chain, and which couples the oxidation of succinate to fumarate with the reduction of ubiquinone (coenzyme Q) to ubiquinol. Promotes maturation of the iron-sulfur protein subunit SDH2 of the SDH catalytic dimer, protecting it from the deleterious effects of oxidants. Acts together with SDHAF3 (SDH7). In Saccharomyces cerevisiae (strain YJM789) (Baker's yeast), this protein is Succinate dehydrogenase assembly factor 1, mitochondrial.